We begin with the raw amino-acid sequence, 296 residues long: NAD kinase (296 aa).

Asp72 serves as the catalytic Proton acceptor. NAD(+) contacts are provided by residues 72–73, 146–147, Arg157, Lys174, Asp176, 187–192, and Gln247; these read DG, ND, and TAYALS.

Belongs to the NAD kinase family. The cofactor is a divalent metal cation.

Its subcellular location is the cytoplasm. The enzyme catalyses NAD(+) + ATP = ADP + NADP(+) + H(+). Its function is as follows. Involved in the regulation of the intracellular balance of NAD and NADP, and is a key enzyme in the biosynthesis of NADP. Catalyzes specifically the phosphorylation on 2'-hydroxyl of the adenosine moiety of NAD to yield NADP. This chain is NAD kinase, found in Pseudomonas savastanoi pv. phaseolicola (strain 1448A / Race 6) (Pseudomonas syringae pv. phaseolicola (strain 1448A / Race 6)).